We begin with the raw amino-acid sequence, 388 residues long: UDP-N-acetylglucosamine--N-acetylmuramyl-(pentapeptide) pyrophosphoryl-undecaprenol N-acetylglucosamine transferase (388 aa).

UDP-N-acetyl-alpha-D-glucosamine-binding positions include 42 to 44, asparagine 159, arginine 195, serine 223, isoleucine 277, and glutamine 322; that span reads TGG.

It belongs to the glycosyltransferase 28 family. MurG subfamily.

The protein resides in the cell inner membrane. It catalyses the reaction di-trans,octa-cis-undecaprenyl diphospho-N-acetyl-alpha-D-muramoyl-L-alanyl-D-glutamyl-meso-2,6-diaminopimeloyl-D-alanyl-D-alanine + UDP-N-acetyl-alpha-D-glucosamine = di-trans,octa-cis-undecaprenyl diphospho-[N-acetyl-alpha-D-glucosaminyl-(1-&gt;4)]-N-acetyl-alpha-D-muramoyl-L-alanyl-D-glutamyl-meso-2,6-diaminopimeloyl-D-alanyl-D-alanine + UDP + H(+). It functions in the pathway cell wall biogenesis; peptidoglycan biosynthesis. Its function is as follows. Cell wall formation. Catalyzes the transfer of a GlcNAc subunit on undecaprenyl-pyrophosphoryl-MurNAc-pentapeptide (lipid intermediate I) to form undecaprenyl-pyrophosphoryl-MurNAc-(pentapeptide)GlcNAc (lipid intermediate II). The chain is UDP-N-acetylglucosamine--N-acetylmuramyl-(pentapeptide) pyrophosphoryl-undecaprenol N-acetylglucosamine transferase from Albidiferax ferrireducens (strain ATCC BAA-621 / DSM 15236 / T118) (Rhodoferax ferrireducens).